Reading from the N-terminus, the 1050-residue chain is Nuclear pore complex-interacting protein family member B3 (1050 aa).

Residues valine 63 to leucine 87 traverse the membrane as a helical segment. Disordered stretches follow at residues asparagine 241–serine 262, leucine 290–threonine 574, and glutamate 785–serine 1050. Positions glutamine 252 to serine 262 are enriched in polar residues. Residues proline 349–proline 359 are compositionally biased toward pro residues. 7 stretches are compositionally biased toward basic and acidic residues: residues aspartate 406–arginine 416, aspartate 448–arginine 458, aspartate 490–arginine 500, aspartate 528–arginine 538, aspartate 820–arginine 830, aspartate 862–arginine 872, and aspartate 904–arginine 914.

This sequence belongs to the NPIP family.

Its subcellular location is the membrane. This chain is Nuclear pore complex-interacting protein family member B3 (NPIPB3), found in Homo sapiens (Human).